A 730-amino-acid chain; its full sequence is Catalase-peroxidase (730 aa).

Basic and acidic residues predominate over residues 1–11 (MDAKTDDKDAG). The N-terminal stretch at 1-21 (MDAKTDDKDAGKCPFSSGSHA) is a signal peptide. The disordered stretch occupies residues 1–24 (MDAKTDDKDAGKCPFSSGSHAHRN). The tryptophyl-tyrosyl-methioninium (Trp-Tyr) (with M-244) cross-link spans 96 to 218 (WHSAGTYRIS…LGAVQMGLIY (123 aa)). Residue His-97 is the Proton acceptor of the active site. A cross-link (tryptophyl-tyrosyl-methioninium (Tyr-Met) (with W-96)) is located at residues 218–244 (YVNPEGPNGNPDPVGSAKDIRETFYRM). His-259 is a heme b binding site.

The protein belongs to the peroxidase family. Peroxidase/catalase subfamily. In terms of assembly, homodimer or homotetramer. It depends on heme b as a cofactor. Post-translationally, formation of the three residue Trp-Tyr-Met cross-link is important for the catalase, but not the peroxidase activity of the enzyme.

It carries out the reaction H2O2 + AH2 = A + 2 H2O. It catalyses the reaction 2 H2O2 = O2 + 2 H2O. Its function is as follows. Bifunctional enzyme with both catalase and broad-spectrum peroxidase activity. In Rhodopseudomonas palustris (strain BisA53), this protein is Catalase-peroxidase.